Here is a 95-residue protein sequence, read N- to C-terminus: Large ribosomal subunit protein eL42 (95 aa).

The Zn(2+) site is built by C11, C14, C71, and C74. A C4-type zinc finger spans residues C11 to C74.

Belongs to the eukaryotic ribosomal protein eL42 family. As to quaternary structure, part of the 50S ribosomal subunit. It depends on Zn(2+) as a cofactor.

In terms of biological role, binds to the 23S rRNA. This is Large ribosomal subunit protein eL42 from Aeropyrum pernix (strain ATCC 700893 / DSM 11879 / JCM 9820 / NBRC 100138 / K1).